The primary structure comprises 226 residues: Cytidylate kinase (226 aa).

10–18 (GPASSGKST) contacts ATP.

Belongs to the cytidylate kinase family. Type 1 subfamily.

It localises to the cytoplasm. It carries out the reaction CMP + ATP = CDP + ADP. The enzyme catalyses dCMP + ATP = dCDP + ADP. In Streptococcus pyogenes serotype M4 (strain MGAS10750), this protein is Cytidylate kinase.